The primary structure comprises 362 residues: Ribosomal RNA large subunit methyltransferase M (362 aa).

S-adenosyl-L-methionine-binding positions include Ser187, 220–223 (CPGG), Asp239, Asp259, and Asp276. Catalysis depends on Lys305, which acts as the Proton acceptor.

This sequence belongs to the class I-like SAM-binding methyltransferase superfamily. RNA methyltransferase RlmE family. RlmM subfamily. Monomer.

The protein resides in the cytoplasm. The catalysed reaction is cytidine(2498) in 23S rRNA + S-adenosyl-L-methionine = 2'-O-methylcytidine(2498) in 23S rRNA + S-adenosyl-L-homocysteine + H(+). In terms of biological role, catalyzes the 2'-O-methylation at nucleotide C2498 in 23S rRNA. The protein is Ribosomal RNA large subunit methyltransferase M of Shewanella frigidimarina (strain NCIMB 400).